The chain runs to 174 residues: Peptide methionine sulfoxide reductase MsrA (174 aa).

Cys10 is a catalytic residue.

It belongs to the MsrA Met sulfoxide reductase family.

The enzyme catalyses L-methionyl-[protein] + [thioredoxin]-disulfide + H2O = L-methionyl-(S)-S-oxide-[protein] + [thioredoxin]-dithiol. It catalyses the reaction [thioredoxin]-disulfide + L-methionine + H2O = L-methionine (S)-S-oxide + [thioredoxin]-dithiol. Its function is as follows. Has an important function as a repair enzyme for proteins that have been inactivated by oxidation. Catalyzes the reversible oxidation-reduction of methionine sulfoxide in proteins to methionine. The sequence is that of Peptide methionine sulfoxide reductase MsrA from Arthrobacter sp. (strain FB24).